The primary structure comprises 336 residues: MSRVTLSRYLIEQTRSNNTPADLRFLIEVVARACKEISHHVSKGALGGVLGSMGTENVQGEVQKKLDVISNDILLEANEWGGHLAGMASEEMDNAYQIPGRYPKGAYLLVFDPLDGSSNIDVNVSVGTIFSVLRCPNEYLSQNETLNENAFLQPGTEQVAAGYAIYGPQTMLILTLGNGVKGFTLDRELGSFVLTHENIQVPATTAEFAINMSNQRHWEAPVQRYVGELLAGETGPLKKNYNMRWIASMVADVHRILTRGGLFMYPRDAREPSKPGKLRLMYEANPMSFIIEQAGGASTNGYERILDIKPESLHQRVSVILGSKEEVERVTAYHKE.

4 residues coordinate Mg(2+): Glu-90, Asp-112, Leu-114, and Asp-115. Substrate is bound by residues Asp-115–Ser-118, Asn-211, and Lys-277. Glu-283 is a binding site for Mg(2+).

The protein belongs to the FBPase class 1 family. Homotetramer. It depends on Mg(2+) as a cofactor.

It is found in the cytoplasm. It catalyses the reaction beta-D-fructose 1,6-bisphosphate + H2O = beta-D-fructose 6-phosphate + phosphate. It functions in the pathway carbohydrate biosynthesis; gluconeogenesis. The chain is Fructose-1,6-bisphosphatase class 1 from Pseudomonas putida (strain W619).